The primary structure comprises 55 residues: Large ribosomal subunit protein bL33 (55 aa).

This sequence belongs to the bacterial ribosomal protein bL33 family.

The sequence is that of Large ribosomal subunit protein bL33 from Ruegeria pomeroyi (strain ATCC 700808 / DSM 15171 / DSS-3) (Silicibacter pomeroyi).